We begin with the raw amino-acid sequence, 240 residues long: 1-(5-phosphoribosyl)-5-[(5-phosphoribosylamino)methylideneamino] imidazole-4-carboxamide isomerase 2 (240 aa).

Residue Asp8 is the Proton acceptor of the active site. Asp129 (proton donor) is an active-site residue.

This sequence belongs to the HisA/HisF family.

It is found in the cytoplasm. It carries out the reaction 1-(5-phospho-beta-D-ribosyl)-5-[(5-phospho-beta-D-ribosylamino)methylideneamino]imidazole-4-carboxamide = 5-[(5-phospho-1-deoxy-D-ribulos-1-ylimino)methylamino]-1-(5-phospho-beta-D-ribosyl)imidazole-4-carboxamide. It functions in the pathway amino-acid biosynthesis; L-histidine biosynthesis; L-histidine from 5-phospho-alpha-D-ribose 1-diphosphate: step 4/9. The sequence is that of 1-(5-phosphoribosyl)-5-[(5-phosphoribosylamino)methylideneamino] imidazole-4-carboxamide isomerase 2 from Ruegeria sp. (strain TM1040) (Silicibacter sp.).